A 995-amino-acid chain; its full sequence is MLDEHILKEMKLSFQLTEQRELASGRRKPEKPQHPPAVPKKKVISKVASNPAKISETMIQKAQMESPKKSKKNKTAGAKRPLSNNVSNPDSSPSQKRLKKDNTLPKKNPVNKSSNVAAKKSAATSKSAKLPIPKVHSINELAPKKTKVKTPNKTKEASLSKKHKVNGNKSSMKVVQNGKVVEIIGTAAETSDIEMNSLDDWSEEDDYLIESDSENDVVEEIDETFLKDPKIFKVKCKGPEYKLSDILPPFEHDEYQPLLLDGDGSGTVRKIKVFKSAQEETDSDEDDIDYEPEDSDDFGSEEFDSEESDSEDTSSADYDSDGDFYSEYSDMEDVSDSDSEEFGSDIFDTDDLDSTYEPPDIEGFFDHPPVGMQREPLIIEEIFDDPPVEKKQERIEQSSVMDIVVKNLSSVPPKKESEVAIETEENDEVSLPEVVTPEKENYLQPSDVPFYRNPQANPTELSVFENSLKSNHVLAVIKEDLEVYGTLVLTLLCGQISVNGYRARRQEAITIYSPKGLNWVSISPTKTKKPVKDEVNWEELNKNFTRAQLDRIKTSFQRQTNAIVLLHRNTSAQQLVDTFGKHMAQNVFPLVNSSNRPFGQSETLLHCLIQSSDQSRTLQVPQVWNKLQMHATSRIIVAGGKGVGKSSLLRYLINRNLGQFPSMLLIDLDIGQPEIFVPQTISCTVIDEPLLGPGFLYNRQPEHAIVVGHTNIVLCAEQYARAVIQLVQNIQNDAKYSNIPWLINTMGYNKGFGIELMALLVDRIRPTDLVQIASPIPINNFDSVLDRNSLSQIKPIIYSAEEFKINEIPKYTLHKLISAVPAREKGTWSLSAKDMRYSNLLARLSSCLTGNAKSLTDCQPLGVSLESLKILHPTSKNYSREELIRGMEANVVYLCHHGAGLPQCLGIGVVRAIDYERKELYLVPAMPLQKMSLVDCLILGGEQSLPQGFLRDQGQGVSSSVPFVFILDDSKSSKSIQQIYHRAPAFLGVPANQRN.

Disordered stretches follow at residues 18 to 173 and 271 to 359; these read EQRE…SSMK and IKVF…YEPP. Composition is skewed to low complexity over residues 75–94 and 110–129; these read TAGA…SSPS and VNKS…KSAK. Residues 279 to 354 show a composition bias toward acidic residues; the sequence is EETDSDEDDI…DIFDTDDLDS (76 aa). 639–646 serves as a coordination point for ATP; sequence GGKGVGKS.

Belongs to the Clp1 family. NOL9/GRC3 subfamily.

The protein resides in the nucleus. Its subcellular location is the nucleolus. Functionally, polynucleotide 5'-kinase involved in rRNA processing. The chain is Polynucleotide 5'-hydroxyl-kinase NOL9 from Drosophila melanogaster (Fruit fly).